The chain runs to 250 residues: Membrane-spanning 4-domains subfamily A member 8 (250 aa).

The Cytoplasmic segment spans residues 1-74; sequence MNSMTSAVPV…ALKEGKTLGA (74 aa). The chain crosses the membrane as a helical span at residues 75-95; it reads IQIIIGLAHIGLGSIMATVLV. Residues 96–98 are Extracellular-facing; it reads GEY. A helical membrane pass occupies residues 99–119; the sequence is LSISFYGGFPFWGGLWFIISG. At 120–136 the chain is on the cytoplasmic side; the sequence is SLSVAAENQPYSYCLLS. A helical membrane pass occupies residues 137-157; the sequence is GSLGLNIVSAICSAVGVILFI. Topologically, residues 158 to 180 are extracellular; it reads TDLSIPHPYAYPDYYPYAWGVNP. A helical membrane pass occupies residues 181–201; sequence GMAISGVLLVFCLLEFGIACA. Residues 202 to 250 lie on the Cytoplasmic side of the membrane; the sequence is SSHFGCQLVCCQSSNVSVIYPNIYAANPVITPEPVTSPPSYSSEIQANK.

Belongs to the MS4A family. Expressed by hematopoietic tissues and cells lines.

It localises to the membrane. Functionally, may be involved in signal transduction as a component of a multimeric receptor complex. The polypeptide is Membrane-spanning 4-domains subfamily A member 8 (MS4A8) (Homo sapiens (Human)).